A 101-amino-acid chain; its full sequence is MAKQSMKAREVKRVALAEKYFAKRAELKAIISDVNASDEDRWNAVLKLQTLPRDSSPSRQRNRCRQTGRPHAFLRKFGLSRIKVREAAMRGEIPGLKKASW.

The protein belongs to the universal ribosomal protein uS14 family. Part of the 30S ribosomal subunit. Contacts proteins S3 and S10.

In terms of biological role, binds 16S rRNA, required for the assembly of 30S particles and may also be responsible for determining the conformation of the 16S rRNA at the A site. This chain is Small ribosomal subunit protein uS14, found in Cronobacter sakazakii (strain ATCC BAA-894) (Enterobacter sakazakii).